The following is a 346-amino-acid chain: Flap endonuclease 1 (346 aa).

Residues 1 to 102 form an N-domain region; the sequence is MGVTELGKLI…AEIEERRKAK (102 aa). Mg(2+) is bound by residues D31, D84, E156, E158, D177, D179, and D239. The interval 120 to 261 is I-domain; the sequence is EVAKYAKRAI…RALKLIWEFG (142 aa).

Belongs to the XPG/RAD2 endonuclease family. FEN1 subfamily. As to quaternary structure, interacts with PCNA. PCNA stimulates the nuclease activity without altering cleavage specificity. Requires Mg(2+) as cofactor.

Structure-specific nuclease with 5'-flap endonuclease and 5'-3' exonuclease activities involved in DNA replication and repair. During DNA replication, cleaves the 5'-overhanging flap structure that is generated by displacement synthesis when DNA polymerase encounters the 5'-end of a downstream Okazaki fragment. Binds the unpaired 3'-DNA end and kinks the DNA to facilitate 5' cleavage specificity. Cleaves one nucleotide into the double-stranded DNA from the junction in flap DNA, leaving a nick for ligation. Also involved in the base excision repair (BER) pathway. Acts as a genome stabilization factor that prevents flaps from equilibrating into structures that lead to duplications and deletions. Also possesses 5'-3' exonuclease activity on nicked or gapped double-stranded DNA. This Pyrobaculum arsenaticum (strain DSM 13514 / JCM 11321 / PZ6) protein is Flap endonuclease 1.